A 747-amino-acid polypeptide reads, in one-letter code: Oxysterol-binding protein-related protein 11 (747 aa).

M1 is subject to N-acetylmethionine. The segment at 1 to 50 (MQGGEPVSTMKVSESEGKLEGQATAVTPNKNSSCGGGISSSSSSRGGSAK) is disordered. S15 is modified (phosphoserine). Position 27 is a phosphothreonine (T27). In terms of domain architecture, PH spans 58 to 155 (MENVYGYLMK…WVSRLQICTQ (98 aa)). A Phosphotyrosine modification is found at Y62. The interval 158–188 (TEAIGKNNPPLKSRSFSLASSSNSPISQRRP) is disordered. Low complexity predominate over residues 170-184 (SRSFSLASSSNSPIS). Residues S172, S174, S177, S181, S184, and S189 each carry the phosphoserine modification. A compositionally biased stretch (basic and acidic residues) spans 689-713 (EIDKATEHKHTLEERQRTEERHRTE). The segment at 689–714 (EIDKATEHKHTLEERQRTEERHRTET) is disordered.

The protein belongs to the OSBP family. Heterodimer with OSBPL9. Present at highest levels in ovary, testis, kidney, liver, stomach, brain, and adipose tissue. Strong expression (at protein level) in epithelial cells of kidney tubules, testicular tubules, caecum, and skin. Present at low levels in subcutaneous and visceral adipose tissue (at protein level).

It is found in the late endosome membrane. The protein localises to the golgi apparatus. The protein resides in the trans-Golgi network membrane. It carries out the reaction a 1,2-diacyl-sn-glycero-3-phospho-(1D-myo-inositol 4-phosphate)(out) + a 1,2-diacyl-sn-glycero-3-phospho-L-serine(in) = a 1,2-diacyl-sn-glycero-3-phospho-(1D-myo-inositol 4-phosphate)(in) + a 1,2-diacyl-sn-glycero-3-phospho-L-serine(out). Plays a role in regulating ADIPOQ and FABP4 levels in differentiating adipocytes and is also involved in regulation of adipocyte triglyceride storage. Weakly binds 25-hydroxycholesterol. Interacts with OSBPL9 to function as lipid transfer proteins. Together they form a heterodimer that localizes at the ER-trans-Golgi membrane contact sites, and exchanges phosphatidylserine (1,2-diacyl-sn-glycero-3-phospho-L-serine, PS) for phosphatidylinositol-4-phosphate (1,2-diacyl-sn-glycero-3-phospho-(1D-myo-inositol 4-phosphate), PI(4)P) between the two organelles, a step that is critical for sphingomyelin synthesis in the Golgi complex. This is Oxysterol-binding protein-related protein 11 (OSBPL11) from Homo sapiens (Human).